Reading from the N-terminus, the 333-residue chain is Holliday junction branch migration complex subunit RuvB (333 aa).

The interval 1–182 (MEERMVSAEA…FGVMARLEYY (182 aa)) is large ATPase domain (RuvB-L). ATP contacts are provided by residues I21, R22, G63, K66, T67, T68, 129 to 131 (EDY), R172, Y182, and R219. T67 lines the Mg(2+) pocket. The segment at 183–253 (NVEELTTIIE…RAIESLERLQ (71 aa)) is small ATPAse domain (RuvB-S). Residues 256 to 333 (RLGLDHIDHK…EHFNMEVPNK (78 aa)) are head domain (RuvB-H). R311 and R316 together coordinate DNA.

Belongs to the RuvB family. In terms of assembly, homohexamer. Forms an RuvA(8)-RuvB(12)-Holliday junction (HJ) complex. HJ DNA is sandwiched between 2 RuvA tetramers; dsDNA enters through RuvA and exits via RuvB. An RuvB hexamer assembles on each DNA strand where it exits the tetramer. Each RuvB hexamer is contacted by two RuvA subunits (via domain III) on 2 adjacent RuvB subunits; this complex drives branch migration. In the full resolvosome a probable DNA-RuvA(4)-RuvB(12)-RuvC(2) complex forms which resolves the HJ.

The protein localises to the cytoplasm. The catalysed reaction is ATP + H2O = ADP + phosphate + H(+). In terms of biological role, the RuvA-RuvB-RuvC complex processes Holliday junction (HJ) DNA during genetic recombination and DNA repair, while the RuvA-RuvB complex plays an important role in the rescue of blocked DNA replication forks via replication fork reversal (RFR). RuvA specifically binds to HJ cruciform DNA, conferring on it an open structure. The RuvB hexamer acts as an ATP-dependent pump, pulling dsDNA into and through the RuvAB complex. RuvB forms 2 homohexamers on either side of HJ DNA bound by 1 or 2 RuvA tetramers; 4 subunits per hexamer contact DNA at a time. Coordinated motions by a converter formed by DNA-disengaged RuvB subunits stimulates ATP hydrolysis and nucleotide exchange. Immobilization of the converter enables RuvB to convert the ATP-contained energy into a lever motion, pulling 2 nucleotides of DNA out of the RuvA tetramer per ATP hydrolyzed, thus driving DNA branch migration. The RuvB motors rotate together with the DNA substrate, which together with the progressing nucleotide cycle form the mechanistic basis for DNA recombination by continuous HJ branch migration. Branch migration allows RuvC to scan DNA until it finds its consensus sequence, where it cleaves and resolves cruciform DNA. This Halalkalibacterium halodurans (strain ATCC BAA-125 / DSM 18197 / FERM 7344 / JCM 9153 / C-125) (Bacillus halodurans) protein is Holliday junction branch migration complex subunit RuvB.